Consider the following 494-residue polypeptide: Transcription termination factor MTERF4, chloroplastic (494 aa).

Residues 1-54 constitute a chloroplast transit peptide; sequence MMKSLLFSAHPTSLLLPAPRLRRLLRLRAASSASASAPPRADRRSPGTPSRRPS. 2 disordered regions span residues 32–61 and 457–494; these read SASA…YARP and VEEM…EFVR. The span at 46 to 56 shows a compositional bias: low complexity; it reads PGTPSRRPSSS. Composition is skewed to acidic residues over residues 457-466 and 473-494; these read VEEMEREDSS and DEVE…EFVR.

The protein belongs to the mTERF family.

It localises to the plastid. Its subcellular location is the chloroplast stroma. Its function is as follows. Transcription termination factor required for processing and steady-state levels of plastid transcripts. Required for splicing of the chloroplastic group II intron. Required for the accumulation of 16S and 23S ribosomes. The polypeptide is Transcription termination factor MTERF4, chloroplastic (Zea mays (Maize)).